Consider the following 161-residue polypeptide: Nucleotide-binding protein Mmwyl1_2033 (161 aa).

This sequence belongs to the YajQ family.

Nucleotide-binding protein. The polypeptide is Nucleotide-binding protein Mmwyl1_2033 (Marinomonas sp. (strain MWYL1)).